A 30-amino-acid polypeptide reads, in one-letter code: AGTEIVTCYNAGTKVPRGPSAXGGAIDFFN.

Functionally, displays antifungal activity against M.arachidicola and P.piricola, but not against R.solani, C.gossypii and C.comatus. Inhibits mycelial growth in P.piricola with an IC(50) of 70 nM. Displays very low cell-free translation inhibitory activity in a rabbit reticulocyte lysate system (IC(50)=70 uM) but is able to inhibit HIV-1 reverse transcriptase activity (IC(50)=5.2 nM). The protein is Antifungal protein Lap of Lyophyllum shimeji (Hon-shimeji).